A 499-amino-acid polypeptide reads, in one-letter code: Aspartyl/glutamyl-tRNA(Asn/Gln) amidotransferase subunit B (499 aa).

The protein belongs to the GatB/GatE family. GatB subfamily. In terms of assembly, heterotrimer of A, B and C subunits.

It carries out the reaction L-glutamyl-tRNA(Gln) + L-glutamine + ATP + H2O = L-glutaminyl-tRNA(Gln) + L-glutamate + ADP + phosphate + H(+). The enzyme catalyses L-aspartyl-tRNA(Asn) + L-glutamine + ATP + H2O = L-asparaginyl-tRNA(Asn) + L-glutamate + ADP + phosphate + 2 H(+). Allows the formation of correctly charged Asn-tRNA(Asn) or Gln-tRNA(Gln) through the transamidation of misacylated Asp-tRNA(Asn) or Glu-tRNA(Gln) in organisms which lack either or both of asparaginyl-tRNA or glutaminyl-tRNA synthetases. The reaction takes place in the presence of glutamine and ATP through an activated phospho-Asp-tRNA(Asn) or phospho-Glu-tRNA(Gln). This is Aspartyl/glutamyl-tRNA(Asn/Gln) amidotransferase subunit B from Salinispora arenicola (strain CNS-205).